Reading from the N-terminus, the 38-residue chain is Large ribosomal subunit protein bL36 (38 aa).

It belongs to the bacterial ribosomal protein bL36 family.

The polypeptide is Large ribosomal subunit protein bL36 (Pseudomonas entomophila (strain L48)).